The chain runs to 122 residues: Large ribosomal subunit protein uL14 (122 aa).

Belongs to the universal ribosomal protein uL14 family. Part of the 50S ribosomal subunit. Forms a cluster with proteins L3 and L19. In the 70S ribosome, L14 and L19 interact and together make contacts with the 16S rRNA in bridges B5 and B8.

In terms of biological role, binds to 23S rRNA. Forms part of two intersubunit bridges in the 70S ribosome. This chain is Large ribosomal subunit protein uL14, found in Alkaliphilus metalliredigens (strain QYMF).